The following is a 2579-amino-acid chain: Ectopic P granules protein 5 homolog (2579 aa).

Disordered regions lie at residues 1 to 46 and 92 to 132; these read MAEA…SREQ and NEES…GTKV. The span at 7-23 shows a compositional bias: basic residues; sequence PQRRAKAKASRTKTKEK. Basic and acidic residues predominate over residues 24-34; sequence KKYETPQREES. At threonine 134 the chain carries Phosphothreonine. Residues 535–564 form a disordered region; that stretch reads PSERKPSSSGPGSGTWTLVDEGGEEDEDPE. The span at 555–564 shows a compositional bias: acidic residues; the sequence is EGGEEDEDPE. Positions 1607–1633 form a coiled coil; that stretch reads MHKNEAISQQLHVLRKEVKQLQAEAAK.

It belongs to the EPG5 family. Interacts with RAN.

The protein localises to the cytoplasm. It is found in the perinuclear region. It localises to the lysosome. Involved in autophagy. May play a role in a late step of autophagy, such as clearance of autophagosomal cargo. Plays a key role in innate and adaptive immune response triggered by unmethylated cytidine-phosphate-guanosine (CpG) dinucleotides from pathogens, and mediated by the nucleotide-sensing receptor TLR9. It is necessary for the translocation of CpG dinucleotides from early endosomes to late endosomes and lysosomes, where TLR9 is located. The sequence is that of Ectopic P granules protein 5 homolog (EPG5) from Homo sapiens (Human).